Reading from the N-terminus, the 1514-residue chain is MGTALVQRGGCCLLCLSLLLLGCWAELGSGLEFPGAEGQWTRFPKWNACCESEMSFQLKTRSARGLVLYFDDEGFCDFLELILTRGGRLQLSFSIFCAEPATLLADTPVNDGAWHSVRIRRQFRNTTLYIDRAEAKWVEVKSKRRDMTVFSGLFVGGLPPELRAAALKLTLASVREREPFKGWIRDVRVNSSQALPVDGGEVKLDDEPPNSGGGSPCEAGEEGEGGVCLNGGVCSVVDDQAVCDCSRTGFRGKDCSQEDNNVEGLAHLMMGDQGKSKGKEEYIATFKGSEYFCYDLSQNPIQSSSDEITLSFKTLQRNGLMLHTGKSADYVNLALKNGAVSLVINLGSGAFEALVEPVNGKFNDNAWHDVKVTRNLRQHSGIGHAMVNKLHCSVTISVDGILTTTGYTQEDYTMLGSDDFFYVGGSPSTADLPGSPVSNNFMGCLKEVVYKNNDVRLELSRLAKQGDPKMKIHGVVAFKCENVATLDPITFETPESFISLPKWNAKKTGSISFDFRTTEPNGLILFSHGKPRHQKDAKHPQMIKVDFFAIEMLDGHLYLLLDMGSGTIKIKALQKKVNDGEWYHVDFQRDGRSGTISVNTLRTPYTAPGESEILDLDDELYLGGLPENKAGLVFPTEVWTALLNYGYVGCIRDLFIDGQSKDIRQMAEIQSTAGVKPSCSKETAKPCLSNPCKNNGMCRDGWNRYVCDCSGTGYLGRSCEREATVLSYDGSMFMKIQLPVVMHTEAEDVSLRFRSQRAYGILMATTSRDSADTLRLELDAGRVKLTVNLDCIRINCNSSKGPETLFAGYNLNDNEWHTVRVVRRGKSLKLTVDDQQAMTGQMAGDHTRLEFHNIETGIITERRYLSSVPSNFIGHLQSLTFNGMAYIDLCKNGDIDYCELNARFGFRNIIADPVTFKTKSSYVALATLQAYTSMHLFFQFKTTSLDGLILYNSGDGNDFIVVELVKGYLHYVFDLGNGANLIKGSSNKPLNDNQWHNVMISRDTSNLHTVKIDTKITTQITAGARNLDLKSDLYIGGVAKETYKSLPKLVHAKEGFQGCLASVDLNGRLPDLISDALFCNGQIERGCEGPSTTCQEDSCSNQGVCLQQWDGFSCDCSMTSFSGPLCNDPGTTYIFSKGGGQITYKWPPNDRPSTRADRLAIGFSTVQKEAVLVRVDSSSGLGDYLELHIHQGKIGVKFNVGTDDIAIEESNAIINDGKYHVVRFTRSGGNATLQVDSWPVIERYPAGNNDNERLAIARQRIPYRLGRVVDEWLLDKGRQLTIFNSQATIIIGGKEQGQPFQGQLSGLYYNGLKVLNMAAENDANIAIVGNVRLVGEVPSSMTTESTATAMQSEMSTSIMETTTTLATSTARRGKPPTKEPISQTTDDILVASAECPSDDEDIDPCEPSSGGLANPTRVGGREPYPGSAEVIRESSSTTGMVVGIVAAAALCILILLYAMYKYRNRDEGSYHVDESRNYISNSAQSNGAVVKEKQPSSAKSANKNKKNKDKEYYV.

Positions 1 to 30 (MGTALVQRGGCCLLCLSLLLLGCWAELGSG) are cleaved as a signal peptide. The Laminin G-like 1 domain maps to 31 to 217 (LEFPGAEGQW…PPNSGGGSPC (187 aa)). Topologically, residues 31 to 1438 (LEFPGAEGQW…EVIRESSSTT (1408 aa)) are extracellular. 2 N-linked (GlcNAc...) asparagine glycosylation sites follow: Asn125 and Asn190. Residues 197–221 (VDGGEVKLDDEPPNSGGGSPCEAGE) are disordered. Residues 219–256 (AGEEGEGGVCLNGGVCSVVDDQAVCDCSRTGFRGKDCS) form the EGF-like 1 domain. 2 disulfides stabilise this stretch: Cys228/Cys243 and Cys245/Cys255. Laminin G-like domains follow at residues 283-480 (IATF…AFKC) and 487-679 (DPIT…KPSC). Positions 329, 346, and 414 each coordinate Ca(2+). 5 disulfides stabilise this stretch: Cys444–Cys480, Cys650–Cys679, Cys687–Cys698, Cys692–Cys707, and Cys709–Cys719. An EGF-like 2 domain is found at 683–720 (TAKPCLSNPCKNNGMCRDGWNRYVCDCSGTGYLGRSCE). Laminin G-like domains lie at 725–898 (VLSY…IDYC) and 912–1087 (DPVT…ERGC). 2 residues coordinate Ca(2+): Asp772 and Leu789. An N-linked (GlcNAc...) asparagine glycan is attached at Asn797. Residue Arg848 participates in Ca(2+) binding. Cystine bridges form between Cys890/Cys898, Cys1059/Cys1087, Cys1094/Cys1105, Cys1099/Cys1114, and Cys1116/Cys1126. One can recognise an EGF-like 3 domain in the interval 1090–1127 (PSTTCQEDSCSNQGVCLQQWDGFSCDCSMTSFSGPLCN). Residues 1133 to 1331 (YIFSKGGGQI…DANIAIVGNV (199 aa)) enclose the Laminin G-like 6 domain. Ca(2+) is bound by residues Asp1183 and Val1200. Asn1230 is a glycosylation site (N-linked (GlcNAc...) asparagine). Positions 1282 and 1284 each coordinate Ca(2+). O-linked (Xyl...) (heparan sulfate) serine glycosylation occurs at Ser1392. Positions 1396–1427 (PSDDEDIDPCEPSSGGLANPTRVGGREPYPGS) are disordered. The chain crosses the membrane as a helical span at residues 1439-1459 (GMVVGIVAAAALCILILLYAM). Over 1460-1514 (YKYRNRDEGSYHVDESRNYISNSAQSNGAVVKEKQPSSAKSANKNKKNKDKEYYV) the chain is Cytoplasmic. Residues 1481-1507 (NSAQSNGAVVKEKQPSSAKSANKNKKN) are interaction with CASK. The segment at 1481–1514 (NSAQSNGAVVKEKQPSSAKSANKNKKNKDKEYYV) is disordered.

Belongs to the neurexin family. Interacts (via laminin G-like domain 2 and/or laminin G-like domain 6) with NLGN1 forming a heterotetramer, where one NLGN1 dimer interacts with one NRXN1 dimer. Also interacts (via laminin G-like domain 2 and/or laminin G-like domain 6) with NLGN2, NLGN3 and NLGN4L; interactions with NLGN1, NLGN2, NLGN3 and NLGN4L are calcium-dependent. Interacts (via cytoplasmic C-terminal region) with CASK (via the PDZ, SH3 and guanylate kinase-like domains). Interacts (via cytoplasmic C-terminus) with CASKIN1 and APBA1. Interacts (via laminin G-like domain 2) with NXPH1 and NXPH3. Alpha-type isoforms (neurexin-1-alpha) interact (via laminin G-like domain 2 and/or laminin G-like domain 6) with DAG1 (via alpha-dystroglycan chain). Interacts with LRRTM1, LRRTM2, LRRTM3 and LRRTM4. Interacts with SYT13 and SYTL1. Interacts with CBLN1, CBLN2 and, less avidly, with CBLN4. Interacts with CLSTN3. Post-translationally, O-glycosylated; contains heparan sulfate. Heparan sulfate attachment is required for synapse development by mediating interactions with neuroligins and LRRTM2.

It localises to the presynaptic cell membrane. Cell surface protein involved in cell-cell-interactions, exocytosis of secretory granules and regulation of signal transmission. Function is isoform-specific. Alpha-type isoforms have a long N-terminus with six laminin G-like domains and play an important role in synaptic signal transmission. Alpha-type isoforms play a role in the regulation of calcium channel activity and Ca(2+)-triggered neurotransmitter release at synapses and at neuromuscular junctions. They play an important role in Ca(2+)-triggered exocytosis of secretory granules in pituitary gland. They may affect their functions at synapses and in endocrine cells via their interactions with proteins from the exocytotic machinery. Likewise, alpha-type isoforms play a role in regulating the activity of postsynaptic NMDA receptors, a subtype of glutamate-gated ion channels. Both alpha-type and beta-type isoforms may play a role in the formation or maintenance of synaptic junctions via their interactions (via the extracellular domains) with neuroligin family members, CBLN1 or CBLN2. In vitro, triggers the de novo formation of presynaptic structures. May be involved in specification of excitatory synapses. Alpha-type isoforms were first identified as receptors for alpha-latrotoxin from spider venom. The sequence is that of Neurexin-1 (Nrxn1) from Mus musculus (Mouse).